The following is a 242-amino-acid chain: MNTSTKLICQKLFAEMLCSCIFGFAVYSAILNTKASNSSISSTTVGLTVCFSSISLIYTFCDHSVAHFNPAITIAAICTGKLDILLGIGYVIAQLIGFILATLLTVVCFPYGYLKTMEFIASARISDDISTVNLFFTEFILSFILVFIAFEVGINAIREPGVTLFVGIKQIDRSKFAPLTIGITLGFLAFLASTTSGGAFNPGIVWGPAIMGGNFDDFVIYIISELSGGLLGAFIQVFLLFK.

Topologically, residues 1–11 (MNTSTKLICQK) are cytoplasmic. Residues 12–32 (LFAEMLCSCIFGFAVYSAILN) traverse the membrane as a helical segment. Residues 33–39 (TKASNSS) are Extracellular-facing. Residues 40–60 (ISSTTVGLTVCFSSISLIYTF) traverse the membrane as a helical segment. Residues 61 to 83 (CDHSVAHFNPAITIAAICTGKLD) lie on the Cytoplasmic side of the membrane. Residues 69 to 71 (NPA) carry the NPA motif. The chain crosses the membrane as a helical span at residues 84-104 (ILLGIGYVIAQLIGFILATLL). The Extracellular portion of the chain corresponds to 105–133 (TVVCFPYGYLKTMEFIASARISDDISTVN). The chain crosses the membrane as a helical span at residues 134-154 (LFFTEFILSFILVFIAFEVGI). Residues 155 to 175 (NAIREPGVTLFVGIKQIDRSK) are Cytoplasmic-facing. Residues 176–196 (FAPLTIGITLGFLAFLASTTS) form a helical membrane-spanning segment. The Extracellular portion of the chain corresponds to 197–217 (GGAFNPGIVWGPAIMGGNFDD). The NPG motif lies at 201–203 (NPG). The helical transmembrane segment at 218–238 (FVIYIISELSGGLLGAFIQVF) threads the bilayer. Over 239-242 (LLFK) the chain is Cytoplasmic.

It belongs to the MIP/aquaporin (TC 1.A.8) family.

It localises to the cell membrane. Water channel required to facilitate the transport of water across membranes. Involved in osmotolerance. The sequence is that of Aquaporin (AQP) from Enterocytozoon bieneusi (strain H348) (Microsporidian parasite).